Consider the following 174-residue polypeptide: ATP-dependent protease subunit HslV (174 aa).

The active site involves Thr2. Positions 157, 160, and 163 each coordinate Na(+).

The protein belongs to the peptidase T1B family. HslV subfamily. As to quaternary structure, a double ring-shaped homohexamer of HslV is capped on each side by a ring-shaped HslU homohexamer. The assembly of the HslU/HslV complex is dependent on binding of ATP.

It localises to the cytoplasm. It carries out the reaction ATP-dependent cleavage of peptide bonds with broad specificity.. Allosterically activated by HslU binding. In terms of biological role, protease subunit of a proteasome-like degradation complex believed to be a general protein degrading machinery. The chain is ATP-dependent protease subunit HslV from Shewanella sediminis (strain HAW-EB3).